Here is a 145-residue protein sequence, read N- to C-terminus: Group IID secretory phospholipase A2 (145 aa).

A signal peptide spans 1 to 20 (MELALLCGLVVMAGVIPIQG). Cystine bridges form between Cys46–Cys138, Cys48–Cys64, Cys63–Cys118, Cys69–Cys145, Cys70–Cys111, Cys79–Cys104, and Cys97–Cys109. 3 residues coordinate Ca(2+): His47, Gly49, and Gly51. His67 is an active-site residue. Asp68 is a binding site for Ca(2+). N-linked (GlcNAc...) asparagine glycosylation is present at Asn89. The active site involves Asp112.

This sequence belongs to the phospholipase A2 family. The cofactor is Ca(2+). In terms of tissue distribution, highly expressed in pancreas and spleen and less abundantly in colon, thymus, placenta, small intestine, and prostate.

The protein localises to the secreted. The catalysed reaction is a 1,2-diacyl-sn-glycero-3-phosphoethanolamine + H2O = a 1-acyl-sn-glycero-3-phosphoethanolamine + a fatty acid + H(+). It carries out the reaction 1-hexadecanoyl-2-(9Z-octadecenoyl)-sn-glycero-3-phosphoethanolamine + H2O = 1-hexadecanoyl-sn-glycero-3-phosphoethanolamine + (9Z)-octadecenoate + H(+). It catalyses the reaction 1-hexadecanoyl-2-(9Z,12Z-octadecadienoyl)-sn-glycero-3-phosphoethanolamine + H2O = 1-hexadecanoyl-sn-glycero-3-phosphoethanolamine + (9Z,12Z)-octadecadienoate + H(+). The enzyme catalyses 1,2-dihexadecanoyl-sn-glycero-3-phospho-(1'-sn-glycerol) + H2O = 1-hexadecanoyl-sn-glycero-3-phospho-(1'-sn-glycerol) + hexadecanoate + H(+). The catalysed reaction is 1-hexadecanoyl-2-(9Z-octadecenoyl)-sn-glycero-3-phospho-(1'-sn-glycerol) + H2O = 1-hexadecanoyl-sn-glycero-3-phospho-(1'-sn-glycerol) + (9Z)-octadecenoate + H(+). It carries out the reaction a 1,2-diacyl-sn-glycero-3-phosphocholine + H2O = a 1-acyl-sn-glycero-3-phosphocholine + a fatty acid + H(+). It catalyses the reaction 1,2-dihexadecanoyl-sn-glycero-3-phosphocholine + H2O = 1-hexadecanoyl-sn-glycero-3-phosphocholine + hexadecanoate + H(+). The enzyme catalyses 1-hexadecanoyl-2-(9Z-octadecenoyl)-sn-glycero-3-phosphocholine + H2O = 1-hexadecanoyl-sn-glycero-3-phosphocholine + (9Z)-octadecenoate + H(+). The catalysed reaction is 1-hexadecanoyl-2-(9Z,12Z-octadecadienoyl)-sn-glycero-3-phosphocholine + H2O = (9Z,12Z)-octadecadienoate + 1-hexadecanoyl-sn-glycero-3-phosphocholine + H(+). It carries out the reaction 1-hexadecanoyl-2-(4Z,7Z,10Z,13Z,16Z,19Z-docosahexaenoyl)-sn-glycero-3-phosphocholine + H2O = (4Z,7Z,10Z,13Z,16Z,19Z)-docosahexaenoate + 1-hexadecanoyl-sn-glycero-3-phosphocholine + H(+). Secretory calcium-dependent phospholipase A2 that primarily targets extracellular lipids, exerting anti-inflammatory and immunosuppressive functions. Hydrolyzes the ester bond of the fatty acyl group attached at sn-2 position of phospholipids (phospholipase A2 activity) with preference for phosphatidylethanolamines and phosphatidylglycerols over phosphatidylcholines. In draining lymph nodes, selectively hydrolyzes diacyl and alkenyl forms of phosphatidylethanolamines, releasing omega-3 polyunsaturated fatty acids (PUFAs) such as eicosapentaenoate and docosahexaenoate that are precursors of the anti-inflammatory lipid mediators, resolvins. During the resolution phase of acute inflammation drives docosahexaenoate-derived resolvin D1 synthesis, which suppresses dendritic cell activation and T-helper 1 immune response. May act in an autocrine and paracrine manner. Via a mechanism independent of its catalytic activity, promotes differentiation of regulatory T cells (Tregs) and participates in the maintenance of immune tolerance. May contribute to lipid remodeling of cellular membranes and generation of lipid mediators involved in pathogen clearance. Displays bactericidal activity against Gram-positive bacteria by directly hydrolyzing phospholipids of the bacterial membrane. The sequence is that of Group IID secretory phospholipase A2 (PLA2G2D) from Homo sapiens (Human).